Here is a 114-residue protein sequence, read N- to C-terminus: Ig heavy chain V-A2 region BS-1 (114 aa).

Pyrrolidone carboxylic acid is present on Gln-1. The region spanning 1-107 (QSVKESEGGL…YLGLMDVWGP (107 aa)) is the Ig-like domain.

The polypeptide is Ig heavy chain V-A2 region BS-1 (Oryctolagus cuniculus (Rabbit)).